The following is a 148-amino-acid chain: MPMDIQKIREYLPHRYPFLLVDRVVEVGENNIVGYKNVSINEEFFQGHFPDYPIMPGVLIVEALAQISGILGFIMNNETPKPGSLFLFAGAEKVRFKKQVVAGDQLVLKAELVMQKRGIYKYNCTATVDGKVATTAEIIVSHLRTEQA.

Histidine 48 is an active-site residue.

Belongs to the thioester dehydratase family. FabZ subfamily.

The protein resides in the cytoplasm. It catalyses the reaction a (3R)-hydroxyacyl-[ACP] = a (2E)-enoyl-[ACP] + H2O. Involved in unsaturated fatty acids biosynthesis. Catalyzes the dehydration of short chain beta-hydroxyacyl-ACPs and long chain saturated and unsaturated beta-hydroxyacyl-ACPs. The polypeptide is 3-hydroxyacyl-[acyl-carrier-protein] dehydratase FabZ (Acinetobacter baylyi (strain ATCC 33305 / BD413 / ADP1)).